The sequence spans 142 residues: Nucleoside diphosphate kinase (142 aa).

Residues Lys-11, Phe-59, Arg-87, Thr-93, Arg-104, and Asn-114 each contribute to the ATP site. His-117 (pros-phosphohistidine intermediate) is an active-site residue.

This sequence belongs to the NDK family. As to quaternary structure, homotetramer. Mg(2+) is required as a cofactor.

Its subcellular location is the cytoplasm. The catalysed reaction is a 2'-deoxyribonucleoside 5'-diphosphate + ATP = a 2'-deoxyribonucleoside 5'-triphosphate + ADP. The enzyme catalyses a ribonucleoside 5'-diphosphate + ATP = a ribonucleoside 5'-triphosphate + ADP. Functionally, major role in the synthesis of nucleoside triphosphates other than ATP. The ATP gamma phosphate is transferred to the NDP beta phosphate via a ping-pong mechanism, using a phosphorylated active-site intermediate. The sequence is that of Nucleoside diphosphate kinase from Yersinia pestis bv. Antiqua (strain Antiqua).